The sequence spans 111 residues: UPF0060 membrane protein Aave_2845 (111 aa).

The next 4 membrane-spanning stretches (helical) occupy residues 7–27 (FLLY…PWLW), 33–53 (SAWL…LLTL), 63–83 (AAYG…VDGI), and 90–110 (LAGA…PRGA).

This sequence belongs to the UPF0060 family.

The protein resides in the cell inner membrane. This is UPF0060 membrane protein Aave_2845 from Paracidovorax citrulli (strain AAC00-1) (Acidovorax citrulli).